A 295-amino-acid polypeptide reads, in one-letter code: Threonine/homoserine exporter RhtA (295 aa).

The Cytoplasmic portion of the chain corresponds to 1–7 (MPGSTRK). A helical transmembrane segment spans residues 8 to 28 (LPVWLPILVLLIAMSSIQSGA). The Periplasmic portion of the chain corresponds to 29–38 (SLAKSLFPLV). The EamA 1 domain occupies 30–135 (LAKSLFPLVG…VLAVLGLWFL (106 aa)). A helical membrane pass occupies residues 39-59 (GAPGVTALRLALGTLILIAFF). Over 60-71 (KPWRLRFAKEQR) the chain is Cytoplasmic. Residues 72–92 (LPLLFYGLSLGGMNYLFYLSI) form a helical membrane-spanning segment. Position 93 (glutamine 93) is a topological domain, periplasmic. A helical membrane pass occupies residues 94–114 (TVPLGIAVALEFTGPLAVALF). Topologically, residues 115–118 (SSRR) are cytoplasmic. Residues 119–139 (PVDFIWVVLAVLGLWFLLPLG) traverse the membrane as a helical segment. The Periplasmic portion of the chain corresponds to 140-146 (QDMSHVD). The helical transmembrane segment at 147-167 (LTGAALALGAGACWAVYILTG) threads the bilayer. Positions 159 to 278 (CWAVYILTGQ…LCAIIAASMG (120 aa)) constitute an EamA 2 domain. Over 168–175 (QRAGAEHG) the chain is Cytoplasmic. Residues 176-196 (PATVAVGSLIAAIIFVPIGAV) traverse the membrane as a helical segment. The Periplasmic segment spans residues 197-200 (QAGD). Residues 201-221 (ALWHWSILPLGLAVAVLSTAL) traverse the membrane as a helical segment. At 222-237 (PYSLEMIALTRLPTRT) the chain is on the cytoplasmic side. The chain crosses the membrane as a helical span at residues 238-258 (FGTLMSMEPALAAVSGMIFLG). Topologically, residues 259 to 262 (ETLT) are periplasmic. A helical membrane pass occupies residues 263–283 (GIQILALCAIIAASMGSTLTI). Over 284-295 (RREPQIKQVDVK) the chain is Cytoplasmic.

The protein belongs to the drug/metabolite transporter (DMT) superfamily. 10 TMS drug/metabolite exporter (DME) (TC 2.A.7.3) family.

Its subcellular location is the cell inner membrane. In terms of biological role, involved in the efflux of threonine and homoserine. This chain is Threonine/homoserine exporter RhtA (rhtA), found in Salmonella typhimurium (strain SL1344).